The following is a 737-amino-acid chain: Translation initiation factor IF-2 (737 aa).

The segment covering 69–80 has biased composition (basic and acidic residues); the sequence is EKKEEKPIRKIM. The tract at residues 69-130 is disordered; that stretch reads EKKEEKPIRK…HKNKGKKKKG (62 aa). Composition is skewed to basic residues over residues 95 to 108 and 121 to 130; these read NNKK…KNKK and HKNKGKKKKG. The tr-type G domain maps to 237 to 404; the sequence is ERPPVITIMG…TILITAEILE (168 aa). A G1 region spans residues 246-253; that stretch reads GHVDHGKT. Position 246–253 (246–253) interacts with GTP; it reads GHVDHGKT. Positions 271–275 are G2; that stretch reads GITQK. The segment at 292 to 295 is G3; the sequence is DTPG. GTP-binding positions include 292 to 296 and 346 to 349; these read DTPGH and NKID. The segment at 346 to 349 is G4; the sequence is NKID. Residues 382-384 are G5; the sequence is SAK.

Belongs to the TRAFAC class translation factor GTPase superfamily. Classic translation factor GTPase family. IF-2 subfamily.

It is found in the cytoplasm. One of the essential components for the initiation of protein synthesis. Protects formylmethionyl-tRNA from spontaneous hydrolysis and promotes its binding to the 30S ribosomal subunits. Also involved in the hydrolysis of GTP during the formation of the 70S ribosomal complex. This Fusobacterium nucleatum subsp. nucleatum (strain ATCC 25586 / DSM 15643 / BCRC 10681 / CIP 101130 / JCM 8532 / KCTC 2640 / LMG 13131 / VPI 4355) protein is Translation initiation factor IF-2.